A 259-amino-acid chain; its full sequence is Phosphatidylserine decarboxylase proenzyme (259 aa).

Ser183 functions as the Schiff-base intermediate with substrate; via pyruvic acid in the catalytic mechanism. Residue Ser183 is modified to Pyruvic acid (Ser); by autocatalysis.

It belongs to the phosphatidylserine decarboxylase family. PSD-A subfamily. As to quaternary structure, heterodimer of a large membrane-associated beta subunit and a small pyruvoyl-containing alpha subunit. Requires pyruvate as cofactor. Is synthesized initially as an inactive proenzyme. Formation of the active enzyme involves a self-maturation process in which the active site pyruvoyl group is generated from an internal serine residue via an autocatalytic post-translational modification. Two non-identical subunits are generated from the proenzyme in this reaction, and the pyruvate is formed at the N-terminus of the alpha chain, which is derived from the carboxyl end of the proenzyme. The post-translation cleavage follows an unusual pathway, termed non-hydrolytic serinolysis, in which the side chain hydroxyl group of the serine supplies its oxygen atom to form the C-terminus of the beta chain, while the remainder of the serine residue undergoes an oxidative deamination to produce ammonia and the pyruvoyl prosthetic group on the alpha chain.

The protein localises to the cell membrane. It carries out the reaction a 1,2-diacyl-sn-glycero-3-phospho-L-serine + H(+) = a 1,2-diacyl-sn-glycero-3-phosphoethanolamine + CO2. It participates in phospholipid metabolism; phosphatidylethanolamine biosynthesis; phosphatidylethanolamine from CDP-diacylglycerol: step 2/2. Its function is as follows. Catalyzes the formation of phosphatidylethanolamine (PtdEtn) from phosphatidylserine (PtdSer). The protein is Phosphatidylserine decarboxylase proenzyme of Neisseria gonorrhoeae (strain ATCC 700825 / FA 1090).